A 648-amino-acid chain; its full sequence is Probable alpha-galactosidase D (648 aa).

Residues 1-16 (MEFIVSLLLLSPALVA) form the signal peptide. Residues asparagine 84 and asparagine 90 are each glycosylated (N-linked (GlcNAc...) asparagine). A disulfide bond links cysteine 123 and cysteine 156. The active-site Nucleophile is aspartate 154. 199–203 (EWGID) serves as a coordination point for substrate. Aspartate 221 acts as the Proton donor in catalysis. N-linked (GlcNAc...) asparagine glycans are attached at residues asparagine 339, asparagine 350, asparagine 505, and asparagine 572.

Belongs to the glycosyl hydrolase 27 family.

The protein resides in the secreted. The enzyme catalyses Hydrolysis of terminal, non-reducing alpha-D-galactose residues in alpha-D-galactosides, including galactose oligosaccharides, galactomannans and galactolipids.. In terms of biological role, hydrolyzes a variety of simple alpha-D-galactoside as well as more complex molecules such as oligosaccharides and polysaccharides. This Aspergillus fumigatus (strain CBS 144.89 / FGSC A1163 / CEA10) (Neosartorya fumigata) protein is Probable alpha-galactosidase D (aglD).